Reading from the N-terminus, the 422-residue chain is Dihydroorotase (422 aa).

Residues His61 and His63 each coordinate Zn(2+). Residues 63–65 and Asn95 each bind substrate; that span reads HLR. Asp153 contacts Zn(2+). Asn278 is a substrate binding site. Position 305 (Asp305) interacts with Zn(2+). Residue Asp305 is part of the active site. Substrate-binding positions include His309 and 322–323; that span reads PG.

It belongs to the metallo-dependent hydrolases superfamily. DHOase family. Class I DHOase subfamily. In terms of assembly, monomer. Forms a 1:1 stoichiometric complex with PyrB. The complex exists as an equilibrium mixture of heterohexamers, composed of 3 PyrC and 3 PyrB subunits, and dodecamers. The complex has both DHOase and ATCase activities. Requires Zn(2+) as cofactor.

The enzyme catalyses (S)-dihydroorotate + H2O = N-carbamoyl-L-aspartate + H(+). The protein operates within pyrimidine metabolism; UMP biosynthesis via de novo pathway; (S)-dihydroorotate from bicarbonate: step 3/3. With respect to regulation, the monomer has very low activity by itself. Activated several thousandfold by formation of a complex with PyrB aspartate carbamoyltransferase (ATCase). Catalyzes the reversible cyclization of carbamoyl aspartate to dihydroorotate. This is Dihydroorotase from Aquifex aeolicus (strain VF5).